The chain runs to 274 residues: 16S rRNA (guanine(1405)-N(7))-methyltransferase (274 aa).

S-adenosyl-L-methionine contacts are provided by residues 102 to 108 (HISTRER), A133, D156, 182 to 183 (DL), L198, and Q207.

The protein belongs to the methyltransferase superfamily. Aminoglycoside resistance family.

The catalysed reaction is guanosine(1405) in 16S rRNA + S-adenosyl-L-methionine = N(7)-methylguanosine(1405) in 16S rRNA + S-adenosyl-L-homocysteine. In terms of biological role, specifically methylates the N(7) position of guanine 1405 in 16S rRNA. Confers resistance to various aminoglycosides, including gentamicin, kanamycin and sisomicin. In Micromonospora zionensis, this protein is 16S rRNA (guanine(1405)-N(7))-methyltransferase (sgm).